A 243-amino-acid chain; its full sequence is ATP synthase subunit a (243 aa).

7 consecutive transmembrane segments (helical) span residues 29–49 (NASL…YIGL), 54–74 (ILPN…VSTI), 89–109 (VFTI…PLGF), 114–134 (HIAV…AIGF), 144–164 (ILLP…IELF), 182–202 (IAGH…NIFL), and 208–228 (AFII…AYIF).

The protein belongs to the ATPase A chain family. F-type ATPases have 2 components, CF(1) - the catalytic core - and CF(0) - the membrane proton channel. CF(1) has five subunits: alpha(3), beta(3), gamma(1), delta(1), epsilon(1). CF(0) has three main subunits: a(1), b(2) and c(9-12). The alpha and beta chains form an alternating ring which encloses part of the gamma chain. CF(1) is attached to CF(0) by a central stalk formed by the gamma and epsilon chains, while a peripheral stalk is formed by the delta and b chains.

Its subcellular location is the cell inner membrane. Its function is as follows. Key component of the proton channel; it plays a direct role in the translocation of protons across the membrane. The protein is ATP synthase subunit a of Ehrlichia chaffeensis (strain ATCC CRL-10679 / Arkansas).